Reading from the N-terminus, the 126-residue chain is Protein ApaG (126 aa).

Positions 2 to 126 (SFPIDSIKIK…FRLAMPGVMQ (125 aa)) constitute an ApaG domain.

The protein is Protein ApaG of Shewanella denitrificans (strain OS217 / ATCC BAA-1090 / DSM 15013).